Here is a 406-residue protein sequence, read N- to C-terminus: Subtilisin-like protease CPC735_023170 (406 aa).

An N-terminal signal peptide occupies residues 1 to 20; sequence MRLFQSTCVLVGTVLPLFTA. The propeptide occupies 21 to 118; sequence FPISSPREIE…VEPDSMAYVT (98 aa). One can recognise an Inhibitor I9 domain in the interval 35 to 115; it reads KYIITFKKGI…VESVEPDSMA (81 aa). Residue Asn125 is glycosylated (N-linked (GlcNAc...) asparagine). Positions 127-406 constitute a Peptidase S8 domain; the sequence is TYGPRRISHR…NKLAYNGSGK (280 aa). Active-site charge relay system residues include Asp161 and His192. N-linked (GlcNAc...) asparagine glycosylation is present at Asn239. Residues 283-309 are disordered; sequence NDGRDAGRNSPGSAPESITVGSINSRR. Residue Asn346 is glycosylated (N-linked (GlcNAc...) asparagine). Catalysis depends on Ser351, which acts as the Charge relay system. Asn402 carries N-linked (GlcNAc...) asparagine glycosylation.

It belongs to the peptidase S8 family.

It localises to the secreted. Functionally, secreted subtilisin-like serine protease with keratinolytic activity that contributes to pathogenicity. This Coccidioides posadasii (strain C735) (Valley fever fungus) protein is Subtilisin-like protease CPC735_023170.